A 181-amino-acid polypeptide reads, in one-letter code: Ferritin heavy chain (181 aa).

Positions 10–159 constitute a Ferritin-like diiron domain; that stretch reads QNYHQDCEAA…DHVTNLRKMG (150 aa). Positions 27, 62, 65, 107, and 141 each coordinate Fe cation.

This sequence belongs to the ferritin family. Oligomer of 24 subunits. There are two types of subunits: L (light) chain and H (heavy) chain. The major chain can be light or heavy, depending on the species and tissue type. The functional molecule forms a roughly spherical shell with a diameter of 12 nm and contains a central cavity into which the insoluble mineral iron core is deposited. In terms of tissue distribution, expressed in erythroblasts (at protein level). Expressed in heart, liver, spleen, lung, kidney, large intestine, small intestine, muscle, glandular stomach, ovary and oviduct.

The protein resides in the cytoplasm. It localises to the lysosome. It is found in the cytoplasmic vesicle. The protein localises to the autophagosome. It carries out the reaction 4 Fe(2+) + O2 + 4 H(+) = 4 Fe(3+) + 2 H2O. Stores iron in a soluble, non-toxic, readily available form. Important for iron homeostasis. Has ferroxidase activity. Iron is taken up in the ferrous form and deposited as ferric hydroxides after oxidation. Also plays a role in delivery of iron to cells. Mediates iron uptake in capsule cells of the developing kidney. Delivery to lysosomes is mediated by the cargo receptor NCOA4 for autophagic degradation and release of iron. Its function is as follows. Inhibits translation of various mRNA species in vitro. Associates with a 35S prosome-like particle that contains non-translated mRNAs in a complex with proteins. May be involved in pre-translational regulation of some mRNA. The protein is Ferritin heavy chain of Anas platyrhynchos (Mallard).